The following is a 453-amino-acid chain: Protein LIAT1 (453 aa).

The disordered stretch occupies residues Met1–Ser152. A lysine-rich domain region spans residues Lys82–Lys103. A compositionally biased stretch (basic residues) spans Arg83 to Gly96. The span at Ser106–Ser117 shows a compositional bias: low complexity. Residues Cys125 to Pro145 show a composition bias toward basic and acidic residues. Positions Pro145 to Tyr197 are interaction with ATE1. Repeat copies occupy residues Ala201 to Glu210, Ala211 to Asp220, Ala221 to Glu230, Ala231 to Glu240, Ala241 to Glu250, Ala251 to Glu260, Ala261 to Glu270, Ala271 to Glu280, Ala281 to Glu290, Ala291 to Glu300, Ala301 to Glu310, Ala311 to Glu320, Ala321 to Lys330, Ala331 to Lys340, Ala341 to Glu350, Ala351 to Lys360, Ala361 to Glu370, Ala371 to Glu380, Ala381 to Glu390, and Ala391 to Asn400. The tract at residues Ala201–Asn400 is 20 X 10 AA approximate tandem repeat of A-L-K-G-F-H-P-D-P-E. Disordered regions lie at residues Phe225–His306 and Glu320–Leu432. Basic and acidic residues predominate over residues Glu320–His396.

Self-associates (via Lys-rich domain); targets LIAT1 to the nucleolus. Interacts with ATE1; it is not a substrate of ATE1, the interaction takes place in the cytoplasm and seems to increase ATE1 arginyltransferase activity. Interacts with JMJD6 and MRPS14. Post-translationally modified by JMJD6 lysyl-hydroxylase activity at its Lys-rich domain, which inhibits its self-association and nucleolar localization.

Its subcellular location is the nucleus. It localises to the nucleolus. The protein resides in the cytoplasm. Participates in nucleolar liquid-liquid phase separation (LLPS) through its N-terminal intrinsically disordered region (IDR). May be involved in ATE1-mediated N-terminal arginylation. This Homo sapiens (Human) protein is Protein LIAT1.